Reading from the N-terminus, the 305-residue chain is Dihydroorotate dehydrogenase B (NAD(+)), catalytic subunit (305 aa).

FMN is bound by residues S23 and 47-48; that span reads KG. Residues K47 and 71-75 contribute to the substrate site; that span reads NAIGL. Positions 101 and 129 each coordinate FMN. Substrate is bound at residue N129. The active-site Nucleophile is the C132. The FMN site is built by K167 and I193. A substrate-binding site is contributed by 194–195; sequence NT. FMN is bound by residues G219, 245–246, and 267–268; these read GG and GT.

Belongs to the dihydroorotate dehydrogenase family. Type 1 subfamily. In terms of assembly, heterotetramer of 2 PyrK and 2 PyrD type B subunits. Requires FMN as cofactor.

The protein resides in the cytoplasm. It catalyses the reaction (S)-dihydroorotate + NAD(+) = orotate + NADH + H(+). The protein operates within pyrimidine metabolism; UMP biosynthesis via de novo pathway; orotate from (S)-dihydroorotate (NAD(+) route): step 1/1. Its function is as follows. Catalyzes the conversion of dihydroorotate to orotate with NAD(+) as electron acceptor. The sequence is that of Dihydroorotate dehydrogenase B (NAD(+)), catalytic subunit (pyrD) from Geotalea uraniireducens (strain Rf4) (Geobacter uraniireducens).